The primary structure comprises 94 residues: Mobilization protein C (94 aa).

In terms of assembly, interacts with MobA and MobB to form the relaxosome.

Functionally, this protein is essential to promote the specific transfer of the plasmid in the presence of conjugative plasmids. This chain is Mobilization protein C (mobC), found in Escherichia coli.